A 103-amino-acid chain; its full sequence is Floral defensin-like protein 1 (103 aa).

An N-terminal signal peptide occupies residues 1-25 (MARSICFFAVAILALMLFAAYDAEA). Cystine bridges form between Cys-28–Cys-72, Cys-32–Cys-48, Cys-39–Cys-59, Cys-45–Cys-66, and Cys-49–Cys-68. The propeptide at 73–103 (VFEKTEATQTETFTKDVNTLAEALLEADMMV) is removed in mature form.

Belongs to the DEFL family. In terms of processing, when compared to other plant defensins, the petunia defensins have an additional fifth disulfide bond. Petals.

Its subcellular location is the secreted. The protein resides in the vacuole. In terms of biological role, plant defense peptide with antifungal activity against F.oxysporum and B.cinerea. The chain is Floral defensin-like protein 1 (D1) from Petunia hybrida (Petunia).